We begin with the raw amino-acid sequence, 475 residues long: Aspartyl/glutamyl-tRNA(Asn/Gln) amidotransferase subunit B (475 aa).

Belongs to the GatB/GatE family. GatB subfamily. As to quaternary structure, heterotrimer of A, B and C subunits.

The enzyme catalyses L-glutamyl-tRNA(Gln) + L-glutamine + ATP + H2O = L-glutaminyl-tRNA(Gln) + L-glutamate + ADP + phosphate + H(+). It catalyses the reaction L-aspartyl-tRNA(Asn) + L-glutamine + ATP + H2O = L-asparaginyl-tRNA(Asn) + L-glutamate + ADP + phosphate + 2 H(+). Its function is as follows. Allows the formation of correctly charged Asn-tRNA(Asn) or Gln-tRNA(Gln) through the transamidation of misacylated Asp-tRNA(Asn) or Glu-tRNA(Gln) in organisms which lack either or both of asparaginyl-tRNA or glutaminyl-tRNA synthetases. The reaction takes place in the presence of glutamine and ATP through an activated phospho-Asp-tRNA(Asn) or phospho-Glu-tRNA(Gln). This is Aspartyl/glutamyl-tRNA(Asn/Gln) amidotransferase subunit B from Helicobacter pylori (strain HPAG1).